Here is an 87-residue protein sequence, read N- to C-terminus: U3-theraphotoxin-Hhn1m (87 aa).

The first 24 residues, 1–24 (MVNMKASMFLTFAGLVLLFVVCYA), serve as a signal peptide directing secretion. A propeptide spanning residues 25–52 (SESEEKEFPKEMLSSIFAVDNDFKQEER) is cleaved from the precursor. 3 disulfides stabilise this stretch: Cys54-Cys67, Cys61-Cys72, and Cys66-Cys79.

The protein belongs to the neurotoxin 10 (Hwtx-1) family. 51 (Hntx-8) subfamily. Hntx-8 sub-subfamily. In terms of tissue distribution, expressed by the venom gland.

It localises to the secreted. Functionally, ion channel inhibitor. The polypeptide is U3-theraphotoxin-Hhn1m (Cyriopagopus hainanus (Chinese bird spider)).